We begin with the raw amino-acid sequence, 519 residues long: Glutamate--cysteine ligase (519 aa).

It belongs to the glutamate--cysteine ligase type 1 family. Type 1 subfamily.

The catalysed reaction is L-cysteine + L-glutamate + ATP = gamma-L-glutamyl-L-cysteine + ADP + phosphate + H(+). It functions in the pathway sulfur metabolism; glutathione biosynthesis; glutathione from L-cysteine and L-glutamate: step 1/2. This chain is Glutamate--cysteine ligase, found in Erwinia tasmaniensis (strain DSM 17950 / CFBP 7177 / CIP 109463 / NCPPB 4357 / Et1/99).